A 370-amino-acid polypeptide reads, in one-letter code: Ni-sirohydrochlorin a,c-diamide reductive cyclase complex, component CfbD (370 aa).

This sequence belongs to the NifD/NifK/NifE/NifN family. As to quaternary structure, homodimer or monomer. The Ni-sirohydrochlorin a,c-diamide reductive cyclase complex is composed of a NifH homolog component CfbC and a NifD homolog component CfbD. Requires [4Fe-4S] cluster as cofactor.

The enzyme catalyses Ni-sirohydrochlorin a,c-diamide + 3 AH2 + ATP + H2O = 15,17(3)-seco-F430-17(3)-acid + 3 A + ADP + phosphate. Its function is as follows. Involved in the biosynthesis of the unique nickel-containing tetrapyrrole coenzyme F430, the prosthetic group of methyl-coenzyme M reductase (MCR), which plays a key role in methanogenesis and anaerobic methane oxidation. Catalyzes both the six-electron reduction of the tetrahydroporphyrin ring system and the gamma-lactamization of the c-acetamide side chain of Ni-sirohydrochlorin a,c-diamide to yield 15,17(3)-seco-F430-17(3)-acid (seco-F430), the last intermediate in the biosynthesis of the coenzyme F430. In Methanosarcina acetivorans (strain ATCC 35395 / DSM 2834 / JCM 12185 / C2A), this protein is Ni-sirohydrochlorin a,c-diamide reductive cyclase complex, component CfbD.